A 197-amino-acid polypeptide reads, in one-letter code: Stanniocalcin-2 (197 aa).

Residues 1-20 (TDAXNPPEGPQDRGSQQKGR) form a disordered region.

The protein belongs to the stanniocalcin family. In terms of assembly, homodimer; disulfide-linked.

It is found in the secreted. In terms of biological role, has an anti-hypocalcemic action on calcium and phosphate homeostasis. The sequence is that of Stanniocalcin-2 (STC2) from Cavia porcellus (Guinea pig).